Here is a 657-residue protein sequence, read N- to C-terminus: Endoplasmic reticulum chaperone BiP homolog (657 aa).

The first 17 residues, 1–17 (MKVFSLILIAFVANAYC), serve as a signal peptide directing secretion. ATP is bound by residues 38-41 (GTTY), Lys99, 229-231 (GGT), 295-302 (EKAKRALS), and 366-369 (GSTR). Residues 128 to 282 (KPNVEVKVGS…KKKSGKDLRK (155 aa)) form a nucleotide-binding (NBD) region. Residues 402 to 502 (VQAGVIGGVE…PRGVPQIEVT (101 aa)) are substrate-binding (SBD). Residues 607–657 (LGSNQDASTEENKEQKKELESVVQPIVSKLYSAGGQGEQASEEPSEDHDEL) form a disordered region. The segment covering 616–626 (EENKEQKKELE) has biased composition (basic and acidic residues). A compositionally biased stretch (acidic residues) spans 646-657 (ASEEPSEDHDEL). The Prevents secretion from ER signature appears at 654 to 657 (HDEL).

This sequence belongs to the heat shock protein 70 family.

The protein localises to the endoplasmic reticulum lumen. The enzyme catalyses ATP + H2O = ADP + phosphate + H(+). Its activity is regulated as follows. The chaperone activity is regulated by ATP-induced allosteric coupling of the nucleotide-binding (NBD) and substrate-binding (SBD) domains. In the ADP-bound and nucleotide-free (apo) states, the two domains have little interaction. In contrast, in the ATP-bound state the two domains are tightly coupled, which results in drastically accelerated kinetics in both binding and release of polypeptide substrates. J domain-containing co-chaperones stimulate the ATPase activity and are required for efficient substrate recognition. Functionally, endoplasmic reticulum chaperone that plays a key role in protein folding and quality control in the endoplasmic reticulum lumen. Required for ER dynamics during the first embryonic cell divisions. Specifically, controls ER transition into sheet-like structures at the onset of mitosis, possibly by regulating homotypic membrane fusion. This Caenorhabditis elegans protein is Endoplasmic reticulum chaperone BiP homolog (hsp-4).